A 100-amino-acid polypeptide reads, in one-letter code: uncharacterized protein (100 aa).

The signal sequence occupies residues 1-23 (MKYVALAFVLSLVILQISAQVGA).

As to expression, nacreous layer of shell (at protein level). Expressed primarily in the mantle with highest level in the mantle pallium and lower level in the mantle edge.

Its subcellular location is the secreted. This is an uncharacterized protein from Margaritifera margaritifera (Freshwater pearl mussel).